The following is a 472-amino-acid chain: Lactate utilization protein B (472 aa).

2 4Fe-4S ferredoxin-type domains span residues 304-334 (GTEFQPVLQCIRCAACVNVCPVYRHIGGHSY) and 353-382 (YDDYKELPYASTLCAACTEACPVKIPLHEL). Residues cysteine 313, cysteine 316, cysteine 319, cysteine 323, cysteine 366, cysteine 369, and cysteine 373 each contribute to the [4Fe-4S] cluster site.

Belongs to the LutB/YkgF family.

Its function is as follows. Is involved in L-lactate degradation and allows cells to grow with lactate as the sole carbon source. Has probably a role as an electron transporter during oxidation of L-lactate. This chain is Lactate utilization protein B, found in Anoxybacillus flavithermus (strain DSM 21510 / WK1).